The following is a 501-amino-acid chain: Phenylalanine--tRNA ligase alpha subunit (501 aa).

L-phenylalanine is bound by residues threonine 340 and phenylalanine 423. Residue glutamate 425 coordinates Mg(2+). L-phenylalanine is bound at residue phenylalanine 448.

This sequence belongs to the class-II aminoacyl-tRNA synthetase family. Phe-tRNA synthetase alpha subunit type 2 subfamily. In terms of assembly, tetramer of two alpha and two beta subunits. Mg(2+) serves as cofactor.

Its subcellular location is the cytoplasm. It carries out the reaction tRNA(Phe) + L-phenylalanine + ATP = L-phenylalanyl-tRNA(Phe) + AMP + diphosphate + H(+). The chain is Phenylalanine--tRNA ligase alpha subunit from Methanococcus vannielii (strain ATCC 35089 / DSM 1224 / JCM 13029 / OCM 148 / SB).